The sequence spans 265 residues: Phosphatidylserine decarboxylase proenzyme (265 aa).

Residue serine 183 is the Schiff-base intermediate with substrate; via pyruvic acid of the active site. Serine 183 is subject to Pyruvic acid (Ser); by autocatalysis. Residues 216 to 246 (TAPQTESEPESEPALQTAPVETAANPSAEQR) form a disordered region.

This sequence belongs to the phosphatidylserine decarboxylase family. PSD-A subfamily. Heterodimer of a large membrane-associated beta subunit and a small pyruvoyl-containing alpha subunit. Requires pyruvate as cofactor. Is synthesized initially as an inactive proenzyme. Formation of the active enzyme involves a self-maturation process in which the active site pyruvoyl group is generated from an internal serine residue via an autocatalytic post-translational modification. Two non-identical subunits are generated from the proenzyme in this reaction, and the pyruvate is formed at the N-terminus of the alpha chain, which is derived from the carboxyl end of the proenzyme. The post-translation cleavage follows an unusual pathway, termed non-hydrolytic serinolysis, in which the side chain hydroxyl group of the serine supplies its oxygen atom to form the C-terminus of the beta chain, while the remainder of the serine residue undergoes an oxidative deamination to produce ammonia and the pyruvoyl prosthetic group on the alpha chain.

It is found in the cell membrane. It catalyses the reaction a 1,2-diacyl-sn-glycero-3-phospho-L-serine + H(+) = a 1,2-diacyl-sn-glycero-3-phosphoethanolamine + CO2. The protein operates within phospholipid metabolism; phosphatidylethanolamine biosynthesis; phosphatidylethanolamine from CDP-diacylglycerol: step 2/2. Its function is as follows. Catalyzes the formation of phosphatidylethanolamine (PtdEtn) from phosphatidylserine (PtdSer). The chain is Phosphatidylserine decarboxylase proenzyme from Neisseria meningitidis serogroup B (strain ATCC BAA-335 / MC58).